Here is a 554-residue protein sequence, read N- to C-terminus: Phosphomannomutase (554 aa).

S149 functions as the Phosphoserine intermediate in the catalytic mechanism. The Mg(2+) site is built by S149, D301, D303, and D305.

It belongs to the phosphohexose mutase family. The cofactor is Mg(2+).

It catalyses the reaction alpha-D-mannose 1-phosphate = D-mannose 6-phosphate. This is Phosphomannomutase (manB) from Mycoplasma pneumoniae (strain ATCC 29342 / M129 / Subtype 1) (Mycoplasmoides pneumoniae).